The sequence spans 411 residues: NADH-quinone oxidoreductase subunit H (411 aa).

9 consecutive transmembrane segments (helical) span residues 18-38 (LAKS…AILI), 84-104 (WIYL…FAVI), 124-144 (LPVA…GIVL), 165-185 (VISY…YAGT), 198-218 (TWYI…MVGE), 260-280 (VSAL…PISI), 288-308 (WWPL…FMWL), 321-341 (MALG…IVAI), and 352-372 (APAT…ALLG).

Belongs to the complex I subunit 1 family. NDH-1 is composed of 14 different subunits. Subunits NuoA, H, J, K, L, M, N constitute the membrane sector of the complex.

Its subcellular location is the cell membrane. It carries out the reaction a quinone + NADH + 5 H(+)(in) = a quinol + NAD(+) + 4 H(+)(out). NDH-1 shuttles electrons from NADH, via FMN and iron-sulfur (Fe-S) centers, to quinones in the respiratory chain. The immediate electron acceptor for the enzyme in this species is believed to be menaquinone. Couples the redox reaction to proton translocation (for every two electrons transferred, four hydrogen ions are translocated across the cytoplasmic membrane), and thus conserves the redox energy in a proton gradient. This subunit may bind ubiquinone. This is NADH-quinone oxidoreductase subunit H from Mycolicibacterium vanbaalenii (strain DSM 7251 / JCM 13017 / BCRC 16820 / KCTC 9966 / NRRL B-24157 / PYR-1) (Mycobacterium vanbaalenii).